A 20-amino-acid polypeptide reads, in one-letter code: Short cationic peptide-4a (20 aa).

Glu20 bears the Glutamic acid 1-amide mark.

In terms of tissue distribution, expressed by the venom gland.

Its subcellular location is the secreted. This is Short cationic peptide-4a from Cupiennius salei (American wandering spider).